The primary structure comprises 192 residues: Fe/S biogenesis protein NfuA (192 aa).

2 residues coordinate [4Fe-4S] cluster: cysteine 149 and cysteine 152.

This sequence belongs to the NfuA family. In terms of assembly, homodimer. [4Fe-4S] cluster serves as cofactor.

Functionally, involved in iron-sulfur cluster biogenesis. Binds a 4Fe-4S cluster, can transfer this cluster to apoproteins, and thereby intervenes in the maturation of Fe/S proteins. Could also act as a scaffold/chaperone for damaged Fe/S proteins. The chain is Fe/S biogenesis protein NfuA from Colwellia psychrerythraea (strain 34H / ATCC BAA-681) (Vibrio psychroerythus).